Reading from the N-terminus, the 303-residue chain is Probable 5-dehydro-4-deoxyglucarate dehydratase (303 aa).

The protein belongs to the DapA family.

The enzyme catalyses 5-dehydro-4-deoxy-D-glucarate + H(+) = 2,5-dioxopentanoate + CO2 + H2O. The protein operates within carbohydrate acid metabolism; D-glucarate degradation; 2,5-dioxopentanoate from D-glucarate: step 2/2. This Pseudomonas putida (strain W619) protein is Probable 5-dehydro-4-deoxyglucarate dehydratase.